The following is a 244-amino-acid chain: 3-deoxy-manno-octulosonate cytidylyltransferase (244 aa).

The protein belongs to the KdsB family.

Its subcellular location is the cytoplasm. The enzyme catalyses 3-deoxy-alpha-D-manno-oct-2-ulosonate + CTP = CMP-3-deoxy-beta-D-manno-octulosonate + diphosphate. It participates in nucleotide-sugar biosynthesis; CMP-3-deoxy-D-manno-octulosonate biosynthesis; CMP-3-deoxy-D-manno-octulosonate from 3-deoxy-D-manno-octulosonate and CTP: step 1/1. It functions in the pathway bacterial outer membrane biogenesis; lipopolysaccharide biosynthesis. Functionally, activates KDO (a required 8-carbon sugar) for incorporation into bacterial lipopolysaccharide in Gram-negative bacteria. In Synechococcus elongatus (strain ATCC 33912 / PCC 7942 / FACHB-805) (Anacystis nidulans R2), this protein is 3-deoxy-manno-octulosonate cytidylyltransferase.